A 271-amino-acid chain; its full sequence is MWIDCKTIARSIEERTKERVEKLGFTPKLVSVACTDDPSALSYLKSQRKKAEKLGIAFEIMNVSPEEIVSTLKKLGSDESVNGVFVARPFPLGLDEKEILSSVPVEKDVEGVNPANLGLLLYDEEIFPPCTAEAAVRILERETNLSGKRVTVVGRSVTVGKPLALMLLKKGRDATVTVCHSRTVNLEEITKNSDIVVVAVGRAHFLKKNMVKEGAIVIDVGINYVDGKLQGDVDPSVEEIARVTPVPGGVGQVTTALLFEHVVRAAERQRK.

Residues 154-156, Ser181, and Ile222 each bind NADP(+); that span reads GRS.

The protein belongs to the tetrahydrofolate dehydrogenase/cyclohydrolase family. As to quaternary structure, homodimer.

The enzyme catalyses (6R)-5,10-methylene-5,6,7,8-tetrahydrofolate + NADP(+) = (6R)-5,10-methenyltetrahydrofolate + NADPH. The catalysed reaction is (6R)-5,10-methenyltetrahydrofolate + H2O = (6R)-10-formyltetrahydrofolate + H(+). It functions in the pathway one-carbon metabolism; tetrahydrofolate interconversion. Catalyzes the oxidation of 5,10-methylenetetrahydrofolate to 5,10-methenyltetrahydrofolate and then the hydrolysis of 5,10-methenyltetrahydrofolate to 10-formyltetrahydrofolate. In Thermotoga maritima (strain ATCC 43589 / DSM 3109 / JCM 10099 / NBRC 100826 / MSB8), this protein is Bifunctional protein FolD.